A 354-amino-acid chain; its full sequence is Variable large protein 15/16 (354 aa).

A signal peptide spans 1–18; that stretch reads MRKRISAIIMTLFMVLVS. Residue Cys19 is the site of N-palmitoyl cysteine attachment. The S-diacylglycerol cysteine moiety is linked to residue Cys19. The tract at residues 333–354 is disordered; it reads EDKSVEATNTAEATTSGQQAKN. A compositionally biased stretch (polar residues) spans 338–354; the sequence is EATNTAEATTSGQQAKN.

Belongs to the variable large protein (Vlp) family. Delta subfamily.

The protein resides in the cell outer membrane. The Vlp and Vsp proteins are antigenically distinct proteins, only one vlp or vsp gene is transcriptionally active at any one time. Switching between these genes is a mechanism of host immune response evasion. This chain is Variable large protein 15/16, found in Borrelia hermsii.